The primary structure comprises 1516 residues: Mediator of RNA polymerase II transcription subunit 14 (1516 aa).

Disordered regions lie at residues 22–98 (LSSQ…EVPA) and 1434–1516 (MHRQ…YPPQ). Residues 34–47 (SPAAPISPAPSGSA) are compositionally biased toward low complexity. Basic and acidic residues predominate over residues 72–83 (SEVDVKSIHSSD). The span at 1463–1473 (SHQQHMMNPGS) shows a compositional bias: low complexity. The span at 1474 to 1483 (VGPGSVGGPG) shows a compositional bias: gly residues. Residues 1502–1516 (QSYHHPLHHQQYPPQ) are compositionally biased toward low complexity.

It belongs to the Mediator complex subunit 14 family. In terms of assembly, component of the Mediator complex.

The protein resides in the nucleus. Component of the Mediator complex, a coactivator involved in the regulated transcription of nearly all RNA polymerase II-dependent genes. Mediator functions as a bridge to convey information from gene-specific regulatory proteins to the basal RNA polymerase II transcription machinery. Mediator is recruited to promoters by direct interactions with regulatory proteins and serves as a scaffold for the assembly of a functional preinitiation complex with RNA polymerase II and the general transcription factors. Required for transcription in the embryo and for phosphorylation of the RNA polymerase II C-terminal domain repeat. In Caenorhabditis elegans, this protein is Mediator of RNA polymerase II transcription subunit 14 (rgr-1).